We begin with the raw amino-acid sequence, 595 residues long: Protein halfway (595 aa).

Disordered stretches follow at residues 1–42 and 64–98; these read MLLT…ADDE and TGAA…PLLP. N-linked (GlcNAc...) asparagine glycans are attached at residues N250 and N255. An LRRNT domain is found at 347 to 402; it reads ESTKRCMTKCPVIPNYGSCKCRFESIMIIQDDQSKPKCHVDCSNLGLVELPPRLPD. 3 LRR repeats span residues 403–424, 429–450, and 454–475; these read NTFV…FQTN, NINR…EGTK, and NFQR…FLNN. Residues 489–538 form the LRRCT domain; the sequence is NKLQCDCNSAKTLQNWLKERSTDIPDYMEIRCRNIPQSVIELQEAKLCQS.

Its function is as follows. Has a role in the ecdysone induced cascade; probably indirect control of 'late' ecdysone genes. The protein is Protein halfway (hfw) of Drosophila pseudoobscura pseudoobscura (Fruit fly).